A 637-amino-acid chain; its full sequence is Choline O-acetyltransferase (637 aa).

The span at methionine 1–glycine 13 shows a compositional bias: basic and acidic residues. Residues methionine 1–lysine 20 are disordered. The active-site Proton acceptor is histidine 329. CoA contacts are provided by residues glycine 407–aspartate 419, serine 445, and glutamine 545.

It belongs to the carnitine/choline acetyltransferase family.

The enzyme catalyses choline + acetyl-CoA = acetylcholine + CoA. In terms of biological role, catalyzes the reversible synthesis of acetylcholine (ACh) from acetyl CoA and choline at cholinergic synapses. This chain is Choline O-acetyltransferase (chat), found in Danio rerio (Zebrafish).